We begin with the raw amino-acid sequence, 725 residues long: Methionine--tRNA ligase (725 aa).

The short motif at 27–37 (PYANGQIHIGH) is the 'HIGH' region element. Residues Cys-158, Cys-161, Cys-171, and Cys-174 each coordinate Zn(2+). The 'KMSKS' region signature appears at 348–352 (KMSKS). Lys-351 is an ATP binding site. The tRNA-binding domain maps to 619-725 (DFAKIDLRIA…SGAKPGMRVK (107 aa)).

Belongs to the class-I aminoacyl-tRNA synthetase family. MetG type 1 subfamily. In terms of assembly, homodimer. The cofactor is Zn(2+).

It localises to the cytoplasm. The catalysed reaction is tRNA(Met) + L-methionine + ATP = L-methionyl-tRNA(Met) + AMP + diphosphate. In terms of biological role, is required not only for elongation of protein synthesis but also for the initiation of all mRNA translation through initiator tRNA(fMet) aminoacylation. This chain is Methionine--tRNA ligase, found in Burkholderia pseudomallei (strain 668).